Consider the following 710-residue polypeptide: FAST kinase domain-containing protein 2, mitochondrial (710 aa).

Residues S126 and S140 each carry the phosphoserine modification. One can recognise an RAP domain in the interval 634-691 (VAVLCVSRSAYCLGSSHPRGFLAMKMRHLNAMGFHVILVNNWEMDKLEMEDAVTFLKT). S708 carries the post-translational modification Phosphoserine.

Belongs to the FAST kinase family. Monomer. Found in a complex with GRSF1, DDX28, DHX30 and FASTKD5. Associates with the 16S mitochondrial rRNA (16S mt-rRNA). Forms a regulatory protein-RNA complex, consisting of RCC1L, NGRN, RPUSD3, RPUSD4, TRUB2, FASTKD2 and 16S mt-rRNA. As to expression, expression detected in spleen, thymus, testis, ovary, colon, heart, smooth muscle, kidney, brain, lung, liver and white adipose tissue with highest expression in heart, smooth muscle and thyroid.

It is found in the mitochondrion matrix. The protein localises to the mitochondrion nucleoid. Its function is as follows. Plays an important role in assembly of the mitochondrial large ribosomal subunit. As a component of a functional protein-RNA module, consisting of RCC1L, NGRN, RPUSD3, RPUSD4, TRUB2, FASTKD2 and 16S mitochondrial ribosomal RNA (16S mt-rRNA), controls 16S mt-rRNA abundance and is required for intra-mitochondrial translation. May play a role in mitochondrial apoptosis. The polypeptide is FAST kinase domain-containing protein 2, mitochondrial (Homo sapiens (Human)).